A 54-amino-acid chain; its full sequence is Secreted virulence factor MC69 (54 aa).

Residues 1 to 18 form the signal peptide; the sequence is MKFTLALLTTLCASLASA. Cysteines 38 and 48 form a disulfide.

This sequence belongs to the MC69 virulence factor family.

It is found in the secreted. Functionally, secreted protein required for appressorial penetration of intact host epidermal cells and for pathogenicity. The polypeptide is Secreted virulence factor MC69 (Colletotrichum orbiculare (strain 104-T / ATCC 96160 / CBS 514.97 / LARS 414 / MAFF 240422) (Cucumber anthracnose fungus)).